Consider the following 326-residue polypeptide: L-carnitine dehydrogenase (326 aa).

NAD(+) is bound at residue Gly19–Gly24.

This sequence belongs to the 3-hydroxyacyl-CoA dehydrogenase family. L-carnitine dehydrogenase subfamily. Homodimer.

It localises to the cytoplasm. The catalysed reaction is carnitine + NAD(+) = 3-dehydrocarnitine + NADH + H(+). The protein operates within amine and polyamine metabolism; carnitine metabolism. Its function is as follows. Catalyzes the NAD(+)-dependent oxidation of L-carnitine to 3-dehydrocarnitine. This chain is L-carnitine dehydrogenase, found in Bacillus cereus (strain ZK / E33L).